The sequence spans 600 residues: 1,8-cineole synthase 1, chloroplastic (600 aa).

The N-terminal 31 residues, 1–31 (MATLRISSALIYQNTLTHHFRLRRPHRFVCK), are a transit peptide targeting the chloroplast. Position 342 (D342) interacts with dimethylallyl diphosphate. D342 and D346 together coordinate Mg(2+). A DDXXD motif motif is present at residues 342-346 (DDIYD). Dimethylallyl diphosphate contacts are provided by E420, R484, and N487. Residues N487, T491, and E495 each coordinate Mg(2+).

It belongs to the terpene synthase family. Tpsb subfamily. Mg(2+) serves as cofactor. The cofactor is Mn(2+). Predominantly expressed in roots and at much lower levels in siliques. Not found in leaves, flowers or stems. Also detected in flowers in cv. Landsberg erecta. Not expressed in root apical meristem and elongation zone. Found in the vascular system of young roots and additionally in the cortex and epidermal cell layer of older roots.

The protein localises to the plastid. It localises to the chloroplast. It catalyses the reaction (2E)-geranyl diphosphate + H2O = 1,8-cineole + diphosphate. It functions in the pathway secondary metabolite biosynthesis; terpenoid biosynthesis. Functionally, involved in monoterpene (C10) biosynthesis. The major product is 1,8-cineole (52%) followed by minor amounts of sabinene (14.5%), myrcene (13.3%), (-)-(1S)-beta-pinene (7.8%), (-)-(4S)-limonene (4.0%), (E)-beta-ocimene (2.7%), alpha-terpineol (2.4%), (-)-(1S)-alpha-pinene (1.9%), terpinolene (0.8%), and (+)-alpha-thujene (0.6%). The chain is 1,8-cineole synthase 1, chloroplastic (TPS27) from Arabidopsis thaliana (Mouse-ear cress).